The primary structure comprises 251 residues: MQYQVDTHTHTVASTHAYSTIHDYLAVAKQKGIRLFATTDHGPAMADAPHFWHFVNLRVLPRMVDGVGILRGIEANIKNIDGEIDFFGDYLKQLDIVLAGFHEPVYPPSDKATHTEAMINTIKSGKVDIITHPGNPAYPIDIDAVARAAAEYGVALEINNSSFEVSRKGSEANCTAIAKAAKEFGTILVMGSDSHVAFSLGGFERALAIIDAAGYPKSQLLNRSPSVLLGFLAQRGHHTVADLQALFDEAV.

Zn(2+)-binding residues include His8, His10, His16, His41, Glu74, His102, His132, Asp193, and His195.

This sequence belongs to the PHP family. The cofactor is Zn(2+).

This Shewanella sp. (strain W3-18-1) protein is Probable phosphatase Sputw3181_2734.